Here is a 368-residue protein sequence, read N- to C-terminus: RNA polymerase sigma factor SigA (368 aa).

The sigma-70 factor domain-1 stretch occupies residues 16 to 90; it reads TLTLEDVKKQ…KLNPSDLSAP (75 aa). Residues 69 to 90 form a disordered region; sequence LVNEKDSSDTDEKLNPSDLSAP. Basic and acidic residues predominate over residues 71–83; the sequence is NEKDSSDTDEKLN. The sigma-70 factor domain-2 stretch occupies residues 135–205; that stretch reads LAEANLRLVV…TRAIADQART (71 aa). Positions 159–162 match the Interaction with polymerase core subunit RpoC motif; sequence DLIQ. Positions 214–291 are sigma-70 factor domain-3; the sequence is ETINKLIRVQ…QEAQSPSDHA (78 aa). Positions 303 to 356 are sigma-70 factor domain-4; sequence VLDTLTDREENVLRLRFGLDDGRTRTLEEVGKVFGVTRERIRQIEAKALRKLRH. The segment at residues 329–348 is a DNA-binding region (H-T-H motif); sequence LEEVGKVFGVTRERIRQIEA.

The protein belongs to the sigma-70 factor family. RpoD/SigA subfamily. As to quaternary structure, interacts transiently with the RNA polymerase catalytic core formed by RpoA, RpoB, RpoC and RpoZ (2 alpha, 1 beta, 1 beta' and 1 omega subunit) to form the RNA polymerase holoenzyme that can initiate transcription. Interacts (via sigma-70 factor domain 4) with the phage G1 protein gp67; this inhibits rRNA synthesis. Interaction with phage G1 protein gp67 does not inhibit transcription in general, but selectively inhibits transcription from promoters that require interaction of the RNA polymerase alpha subunit with DNA sequences upstream of the -35 promoter element.

The protein localises to the cytoplasm. In terms of biological role, sigma factors are initiation factors that promote the attachment of RNA polymerase to specific initiation sites and are then released. This sigma factor is the primary sigma factor during exponential growth. In Staphylococcus aureus (strain NCTC 8325 / PS 47), this protein is RNA polymerase sigma factor SigA.